The primary structure comprises 492 residues: Ketol-acid reductoisomerase (NADP(+)) (492 aa).

Positions 15–208 (AQLGKCRFMA…GGDRAGVLES (194 aa)) constitute a KARI N-terminal Rossmann domain. Residues 45 to 48 (CGAQ), Arg68, Arg76, Ser78, and 108 to 110 (DKQ) contribute to the NADP(+) site. His132 is a catalytic residue. Gly158 lines the NADP(+) pocket. 2 KARI C-terminal knotted domains span residues 209–344 (SFVA…KAPP) and 345–485 (FEGK…MTDM). Residues Asp217, Glu221, Glu389, and Glu393 each contribute to the Mg(2+) site. Ser414 provides a ligand contact to substrate.

It belongs to the ketol-acid reductoisomerase family. It depends on Mg(2+) as a cofactor.

The catalysed reaction is (2R)-2,3-dihydroxy-3-methylbutanoate + NADP(+) = (2S)-2-acetolactate + NADPH + H(+). It carries out the reaction (2R,3R)-2,3-dihydroxy-3-methylpentanoate + NADP(+) = (S)-2-ethyl-2-hydroxy-3-oxobutanoate + NADPH + H(+). It participates in amino-acid biosynthesis; L-isoleucine biosynthesis; L-isoleucine from 2-oxobutanoate: step 2/4. Its pathway is amino-acid biosynthesis; L-valine biosynthesis; L-valine from pyruvate: step 2/4. Functionally, involved in the biosynthesis of branched-chain amino acids (BCAA). Catalyzes an alkyl-migration followed by a ketol-acid reduction of (S)-2-acetolactate (S2AL) to yield (R)-2,3-dihydroxy-isovalerate. In the isomerase reaction, S2AL is rearranged via a Mg-dependent methyl migration to produce 3-hydroxy-3-methyl-2-ketobutyrate (HMKB). In the reductase reaction, this 2-ketoacid undergoes a metal-dependent reduction by NADPH to yield (R)-2,3-dihydroxy-isovalerate. In Edwardsiella ictaluri (strain 93-146), this protein is Ketol-acid reductoisomerase (NADP(+)).